The primary structure comprises 177 residues: RNA polymerase sigma-E factor (177 aa).

The short motif at aspartate 34–tryptophan 47 is the Polymerase core binding element. Positions threonine 128–histidine 147 form a DNA-binding region, H-T-H motif.

This sequence belongs to the sigma-70 factor family. ECF subfamily.

The protein localises to the cytoplasm. In terms of biological role, sigma factors are initiation factors that promote the attachment of RNA polymerase to specific initiation sites and are then released. This sigma factor is required for normal cell wall integrity; it is recruited by RNA polymerase to transcribe genes with cell wall-related functions. It is also involved in the transcription of the dagA gene coding for an extracellular agar-degrading enzyme. The chain is RNA polymerase sigma-E factor (sigE) from Streptomyces coelicolor (strain ATCC BAA-471 / A3(2) / M145).